Consider the following 320-residue polypeptide: o-succinylbenzoate synthase (320 aa).

The active-site Proton donor is the K133. 3 residues coordinate Mg(2+): D161, E190, and D213. K235 serves as the catalytic Proton acceptor.

Belongs to the mandelate racemase/muconate lactonizing enzyme family. MenC type 1 subfamily. The cofactor is a divalent metal cation.

The catalysed reaction is (1R,6R)-6-hydroxy-2-succinyl-cyclohexa-2,4-diene-1-carboxylate = 2-succinylbenzoate + H2O. It participates in quinol/quinone metabolism; 1,4-dihydroxy-2-naphthoate biosynthesis; 1,4-dihydroxy-2-naphthoate from chorismate: step 4/7. The protein operates within quinol/quinone metabolism; menaquinone biosynthesis. Functionally, converts 2-succinyl-6-hydroxy-2,4-cyclohexadiene-1-carboxylate (SHCHC) to 2-succinylbenzoate (OSB). The protein is o-succinylbenzoate synthase of Escherichia coli O45:K1 (strain S88 / ExPEC).